The primary structure comprises 272 residues: HMP-PP phosphatase (272 aa).

Residue Asp8 is the Nucleophile of the active site. Mg(2+)-binding residues include Asp8, Asp10, and Asp212.

It belongs to the HAD-like hydrolase superfamily. Cof family. Mg(2+) serves as cofactor.

The enzyme catalyses 4-amino-2-methyl-5-(diphosphooxymethyl)pyrimidine + H2O = 4-amino-2-methyl-5-(phosphooxymethyl)pyrimidine + phosphate + H(+). Its function is as follows. Catalyzes the hydrolysis of 4-amino-2-methyl-5-hydroxymethylpyrimidine pyrophosphate (HMP-PP) to 4-amino-2-methyl-5-hydroxymethylpyrimidine phosphate (HMP-P). This chain is HMP-PP phosphatase, found in Klebsiella pneumoniae (strain 342).